Reading from the N-terminus, the 56-residue chain is MRTEVVVFTLHESGKSFIEIARELNLQAKEVAVLWAREKVVYRKRHINKKVKNGTV.

This is an uncharacterized protein from Escherichia coli (Bacteriophage T4).